Here is a 712-residue protein sequence, read N- to C-terminus: Patatin-like phospholipase domain-containing protein AFUA_1G04970 (712 aa).

Basic and acidic residues predominate over residues 1–13 (MTSDEKSATRDIY). The interval 1-20 (MTSDEKSATRDIYDPNTLPD) is disordered. The helical transmembrane segment at 85-105 (WPFLFTVFAWITVLGFAYTLT) threads the bilayer. The PNPLA domain occupies 275 to 466 (LCLSGGATFA…RTDIPIKALN (192 aa)). Residues 306-310 (GTSGG) carry the GXSXG motif. Serine 308 serves as the catalytic Nucleophile. Catalysis depends on aspartate 453, which acts as the Proton acceptor. A disordered region spans residues 628–688 (RRRQDRAQEH…PDARRSSMFE (61 aa)). 2 stretches are compositionally biased toward basic and acidic residues: residues 632–646 (DRAQEHADRMVERLD) and 652–664 (RQSDYKDESHYAE). Over residues 667 to 676 (DSLSATSSRP) the composition is skewed to polar residues. A compositionally biased stretch (basic and acidic residues) spans 677–688 (HTPDARRSSMFE).

It belongs to the PLPL family.

It localises to the membrane. In terms of biological role, probable lipid hydrolase. The polypeptide is Patatin-like phospholipase domain-containing protein AFUA_1G04970 (Aspergillus fumigatus (strain ATCC MYA-4609 / CBS 101355 / FGSC A1100 / Af293) (Neosartorya fumigata)).